An 86-amino-acid chain; its full sequence is Muscarinic toxin 2 (86 aa).

The signal sequence occupies residues 1-21 (MKTLLLTLVVVTIVCLDLGYT). 4 disulfide bridges follow: C24–C45, C38–C63, C67–C78, and C79–C84.

The protein belongs to the three-finger toxin family. Short-chain subfamily. Aminergic toxin sub-subfamily. Monomer. In terms of tissue distribution, expressed by the venom gland.

It localises to the secreted. Functionally, binds irreversibly to M1 (CHRM1) muscarinic acetylcholine receptors, and reveals a slightly weaker effect on M3 (CHRM3) receptors. The mechanism of toxin-receptor interaction comprises at least two steps. The first step is fast with no competition between the toxin and the antagonist. The second step is slow with formation of a more stable toxin-receptor complex and inhibition of the antagonist binding. The chain is Muscarinic toxin 2 from Dendroaspis angusticeps (Eastern green mamba).